The following is a 361-amino-acid chain: Terpene synthase 6 (361 aa).

The DDxx(x)D/E motif motif lies at 81–86 (DDVLDA). The short motif at 223-231 (NDLVSYEKE) is the NDxxSxxxD/E motif element.

The protein belongs to the terpene synthase family.

The catalysed reaction is (2E,6E)-farnesyl diphosphate = (2S,3R,6S,9S)-(-)-protoillud-7-ene + diphosphate. In terms of biological role, terpene synthase that converts its substrate farnesyl diphosphate (FPP) into the sesquiterpene (2S,3R,6S,9S)-(-)-protoillud-7-ene. In Dictyostelium discoideum (Social amoeba), this protein is Terpene synthase 6.